The sequence spans 146 residues: Hemoglobin subunit beta-0 (146 aa).

The 145-residue stretch at 2–146 (EWTDFERATI…VVSSLGRQYH (145 aa)) folds into the Globin domain. H63 and H92 together coordinate heme b.

The protein belongs to the globin family. As to quaternary structure, heterotetramer of two alpha chains and two beta chains. In terms of tissue distribution, red blood cells.

Functionally, involved in oxygen transport from gills to the various peripheral tissues. The sequence is that of Hemoglobin subunit beta-0 (hbb0) from Pagothenia borchgrevinki (Bald rockcod).